We begin with the raw amino-acid sequence, 139 residues long: Large-conductance mechanosensitive channel (139 aa).

A run of 2 helical transmembrane segments spans residues 9–29 (AFAV…GAAF) and 79–99 (IQTV…VKAI).

Belongs to the MscL family. Homopentamer.

The protein localises to the cell inner membrane. Functionally, channel that opens in response to stretch forces in the membrane lipid bilayer. May participate in the regulation of osmotic pressure changes within the cell. This is Large-conductance mechanosensitive channel from Pseudomonas putida (strain GB-1).